Consider the following 43-residue polypeptide: METATILGISIAAALVGITVLALYTAFGPPAAELSDPFEDHED.

A helical transmembrane segment spans residues A4 to Y24.

Belongs to the PsbN family.

It is found in the cellular thylakoid membrane. Functionally, may play a role in photosystem I and II biogenesis. This chain is Protein PsbN 2, found in Microcystis aeruginosa (strain NIES-843 / IAM M-2473).